A 475-amino-acid chain; its full sequence is MEFIILSLLLLSLALYSLYYVIIKPKPTTQNLPPGRKGWPFIGETLEYHALSKKGCIEKFMSQRMQKYSSKIFKTSYLGADMVFLCSAEGNKLLFSNEHKLFKPWLPRIIENSFKSSPNITLQDEFNSLRRVIGSFTEPNALRRYVGMMDANAKRHLRKYWDGNDVVKVHDLSRKFIFALCSELMYNIHDTRTADELENLAHCIMTEFFIIPVNIPGTKFGRAVRAGREFHQRFRNMIKQRRLEIEEKREPEHKDILSLLLLEKNKDGEDLTESEIALKMQAVLIGAYDNPSIAISTIIKFLAELPEIYEQVLREQMEIANSKGPDELLSFDDLKRMKYTWNVISEVLRMEPPNSGTFREALTEVTIDGYTIPKGFKLHWAVNATHKDPECFPNPEKFDPSRYQGNDIVPFSYVPFGAGPHICPGKEFARLKLLVFFHNLVRKFRWEKIIPDEKMIRNPNLMPEKGLPVRLYPNN.

Residues 3–23 (FIILSLLLLSLALYSLYYVII) form a helical membrane-spanning segment. Cys423 serves as a coordination point for heme.

Belongs to the cytochrome P450 family. The cofactor is heme. As to expression, expressed in flowers, maturing fruits and in juice vesicles.

The protein localises to the membrane. It carries out the reaction (21S)-21-acetoxyl-apo-melianone + reduced [NADPH--hemoprotein reductase] + O2 = luvungin A + oxidized [NADPH--hemoprotein reductase] + H2O + H(+). It functions in the pathway secondary metabolite biosynthesis; terpenoid biosynthesis. Monooxygenase involved in the biosynthesis of limonoids triterpene natural products such as limonin, a compound with insecticidal activity responsible for the bitter taste in citrus. Catalyzes the conversion of (21S)-21-acetoxyl-apo-melianone to luvungin A. This chain is Luvungin A synthase CYP716AC1, found in Citrus sinensis (Sweet orange).